Here is a 337-residue protein sequence, read N- to C-terminus: Transaldolase (337 aa).

The Nuclear localization signal motif lies at 1–10 (MSGSPVKRQR). Residue Lys-142 is the Schiff-base intermediate with substrate of the active site. The residue at position 219 (Lys-219) is an N6-acetyllysine. A phosphoserine mark is found at Ser-237 and Ser-256. N6-acetyllysine occurs at positions 269, 286, and 321.

Belongs to the transaldolase family. Type 1 subfamily. As to quaternary structure, homodimer. Interacts with KPNA1 and KPNA4.

The protein localises to the nucleus. It is found in the cytoplasm. It carries out the reaction D-sedoheptulose 7-phosphate + D-glyceraldehyde 3-phosphate = D-erythrose 4-phosphate + beta-D-fructose 6-phosphate. It participates in carbohydrate degradation; pentose phosphate pathway; D-glyceraldehyde 3-phosphate and beta-D-fructose 6-phosphate from D-ribose 5-phosphate and D-xylulose 5-phosphate (non-oxidative stage): step 2/3. Catalyzes the rate-limiting step of the non-oxidative phase in the pentose phosphate pathway. Catalyzes the reversible conversion of sedheptulose-7-phosphate and D-glyceraldehyde 3-phosphate into erythrose-4-phosphate and beta-D-fructose 6-phosphate. The protein is Transaldolase (TALDO1) of Sus scrofa (Pig).